The chain runs to 621 residues: UvrABC system protein C (621 aa).

Residues 13–92 (EKPGVYMMRN…IKENRPKYNV (80 aa)) form the GIY-YIG domain. Residues 205–240 (DELVRKIEEKMKAAAISMDFENAARYRDQIIALNNI) enclose the UVR domain.

It belongs to the UvrC family. As to quaternary structure, interacts with UvrB in an incision complex.

Its subcellular location is the cytoplasm. The UvrABC repair system catalyzes the recognition and processing of DNA lesions. UvrC both incises the 5' and 3' sides of the lesion. The N-terminal half is responsible for the 3' incision and the C-terminal half is responsible for the 5' incision. This chain is UvrABC system protein C, found in Alkaliphilus oremlandii (strain OhILAs) (Clostridium oremlandii (strain OhILAs)).